Consider the following 316-residue polypeptide: Glutamyl-Q tRNA(Asp) synthetase (316 aa).

Residues 13–17 (RFAPS) and aspartate 49 contribute to the L-glutamate site. The 'HIGH' region motif lies at 16–26 (PSPSGDLHFGS). Positions 105, 107, 119, and 123 each coordinate Zn(2+). 2 residues coordinate L-glutamate: tyrosine 176 and arginine 194. Positions 232-236 (KLSKQ) match the 'KMSKS' region motif. An ATP-binding site is contributed by lysine 235.

The protein belongs to the class-I aminoacyl-tRNA synthetase family. GluQ subfamily. The cofactor is Zn(2+).

Its function is as follows. Catalyzes the tRNA-independent activation of glutamate in presence of ATP and the subsequent transfer of glutamate onto a tRNA(Asp). Glutamate is transferred on the 2-amino-5-(4,5-dihydroxy-2-cyclopenten-1-yl) moiety of the queuosine in the wobble position of the QUC anticodon. This is Glutamyl-Q tRNA(Asp) synthetase from Photorhabdus laumondii subsp. laumondii (strain DSM 15139 / CIP 105565 / TT01) (Photorhabdus luminescens subsp. laumondii).